Consider the following 629-residue polypeptide: tRNA uridine 5-carboxymethylaminomethyl modification enzyme MnmG (629 aa).

Residues 13 to 18 (GGGHAG), Val-125, and Ser-180 each bind FAD. 273-287 (GPRYCPSIEDKVMRF) lines the NAD(+) pocket. Position 370 (Gln-370) interacts with FAD.

The protein belongs to the MnmG family. Homodimer. Heterotetramer of two MnmE and two MnmG subunits. Requires FAD as cofactor.

It localises to the cytoplasm. NAD-binding protein involved in the addition of a carboxymethylaminomethyl (cmnm) group at the wobble position (U34) of certain tRNAs, forming tRNA-cmnm(5)s(2)U34. This Salmonella paratyphi C (strain RKS4594) protein is tRNA uridine 5-carboxymethylaminomethyl modification enzyme MnmG.